A 292-amino-acid polypeptide reads, in one-letter code: Sulfofructosephosphate aldolase (292 aa).

Lysine 193 (schiff-base intermediate with substrate) is an active-site residue.

It belongs to the aldolase LacD family. In terms of assembly, homotetramer.

The catalysed reaction is 6-deoxy-6-sulfo-D-fructose 1-phosphate = (2S)-3-sulfolactaldehyde + dihydroxyacetone phosphate. Its function is as follows. Cleaves 6-deoxy-6-sulfo-D-fructose 1-phosphate (SFP) to form dihydroxyacetone phosphate (DHAP) and 3-sulfolactaldehyde (SLA). In Escherichia coli O157:H7, this protein is Sulfofructosephosphate aldolase (yihT).